The following is a 184-amino-acid chain: dITP/XTP pyrophosphatase (184 aa).

Residue 5-10 (SSNRHK) coordinates substrate. Residues E33 and D62 each contribute to the Mg(2+) site. D62 (proton acceptor) is an active-site residue. Substrate contacts are provided by residues S63, 136–139 (WGFD), K158, and 163–164 (HR).

This sequence belongs to the HAM1 NTPase family. In terms of assembly, homodimer. It depends on Mg(2+) as a cofactor.

It catalyses the reaction XTP + H2O = XMP + diphosphate + H(+). It carries out the reaction dITP + H2O = dIMP + diphosphate + H(+). The catalysed reaction is ITP + H2O = IMP + diphosphate + H(+). In terms of biological role, pyrophosphatase that catalyzes the hydrolysis of nucleoside triphosphates to their monophosphate derivatives, with a high preference for the non-canonical purine nucleotides XTP (xanthosine triphosphate), dITP (deoxyinosine triphosphate) and ITP. Seems to function as a house-cleaning enzyme that removes non-canonical purine nucleotides from the nucleotide pool, thus preventing their incorporation into DNA/RNA and avoiding chromosomal lesions. The polypeptide is dITP/XTP pyrophosphatase (Korarchaeum cryptofilum (strain OPF8)).